The primary structure comprises 172 residues: Peptide deformylase (172 aa).

Residues C94 and H136 each contribute to the Fe cation site. The active site involves E137. H140 provides a ligand contact to Fe cation.

Belongs to the polypeptide deformylase family. The cofactor is Fe(2+).

The enzyme catalyses N-terminal N-formyl-L-methionyl-[peptide] + H2O = N-terminal L-methionyl-[peptide] + formate. Functionally, removes the formyl group from the N-terminal Met of newly synthesized proteins. Requires at least a dipeptide for an efficient rate of reaction. N-terminal L-methionine is a prerequisite for activity but the enzyme has broad specificity at other positions. This chain is Peptide deformylase, found in Pelagibacter ubique (strain HTCC1062).